The sequence spans 199 residues: ATP-dependent Clp protease proteolytic subunit 2 (199 aa).

Ser-98 functions as the Nucleophile in the catalytic mechanism. Residue His-123 is part of the active site.

This sequence belongs to the peptidase S14 family. As to quaternary structure, fourteen ClpP subunits assemble into 2 heptameric rings which stack back to back to give a disk-like structure with a central cavity, resembling the structure of eukaryotic proteasomes.

The protein resides in the cytoplasm. The enzyme catalyses Hydrolysis of proteins to small peptides in the presence of ATP and magnesium. alpha-casein is the usual test substrate. In the absence of ATP, only oligopeptides shorter than five residues are hydrolyzed (such as succinyl-Leu-Tyr-|-NHMec, and Leu-Tyr-Leu-|-Tyr-Trp, in which cleavage of the -Tyr-|-Leu- and -Tyr-|-Trp bonds also occurs).. Its function is as follows. Cleaves peptides in various proteins in a process that requires ATP hydrolysis. Has a chymotrypsin-like activity. Plays a major role in the degradation of misfolded proteins. The chain is ATP-dependent Clp protease proteolytic subunit 2 from Corynebacterium diphtheriae (strain ATCC 700971 / NCTC 13129 / Biotype gravis).